Reading from the N-terminus, the 465-residue chain is Gamma-aminobutyric acid receptor subunit gamma-1 (465 aa).

A signal peptide spans 1 to 20 (MGSGKAFLFSPSLLWSQTRG). Residues 21–273 (VRLIFLLLTL…FDLSRRMGYF (253 aa)) lie on the Extracellular side of the membrane. N-linked (GlcNAc...) asparagine glycosylation is found at Asn-50 and Asn-127. Cys-188 and Cys-202 are disulfide-bonded. Residue Asn-245 is glycosylated (N-linked (GlcNAc...) asparagine). Residues 274 to 294 (TIQTYIPCILTVVLSWVSFWI) form a helical membrane-spanning segment. The Cytoplasmic portion of the chain corresponds to 295–300 (NKDAVP). A helical transmembrane segment spans residues 301–320 (ARTSLGITTVLTMTTLSTIA). The Extracellular portion of the chain corresponds to 321 to 328 (RKSLPKVS). Residues 329–349 (YVTAMDLFVSVCFIFVFAALM) traverse the membrane as a helical segment. At 350 to 444 (EYGTLHYFTS…RIAKIDSYSR (95 aa)) the chain is on the cytoplasmic side. The chain crosses the membrane as a helical span at residues 445–465 (IFFPTAFALFNLVYWVGYLYL).

Belongs to the ligand-gated ion channel (TC 1.A.9) family. Gamma-aminobutyric acid receptor (TC 1.A.9.5) subfamily. GABRG1 sub-subfamily. Heteropentamer, formed by a combination of alpha (GABRA1-6), beta (GABRB1-3), gamma (GABRG1-3), delta (GABRD), epsilon (GABRE), rho (GABRR1-3), pi (GABRP) and theta (GABRQ) chains, each subunit exhibiting distinct physiological and pharmacological properties. Post-translationally, may be palmitoylated. In terms of tissue distribution, expressed in brain.

Its subcellular location is the postsynaptic cell membrane. The protein localises to the cell membrane. The catalysed reaction is chloride(in) = chloride(out). Its function is as follows. Gamma subunit of the heteropentameric ligand-gated chloride channel gated by gamma-aminobutyric acid (GABA), a major inhibitory neurotransmitter in the brain. GABA-gated chloride channels, also named GABA(A) receptors (GABAAR), consist of five subunits arranged around a central pore and contain GABA active binding site(s) located at the alpha and beta subunit interface(s). When activated by GABA, GABAARs selectively allow the flow of chloride anions across the cell membrane down their electrochemical gradient. Chloride influx into the postsynaptic neuron following GABAAR opening decreases the neuron ability to generate a new action potential, thereby reducing nerve transmission. In Mus musculus (Mouse), this protein is Gamma-aminobutyric acid receptor subunit gamma-1.